The primary structure comprises 882 residues: Putative HTH-type transcriptional regulator Rv0890c (882 aa).

In terms of domain architecture, HTH luxR-type spans proline 814–glycine 879. A DNA-binding region (H-T-H motif) is located at residues asparagine 838 to threonine 857.

The protein is Putative HTH-type transcriptional regulator Rv0890c of Mycobacterium tuberculosis (strain ATCC 25618 / H37Rv).